A 1528-amino-acid polypeptide reads, in one-letter code: Mitogen-activated protein kinase kinae kinase MCK1 (1528 aa).

The span at 1-11 (MYPGSSQSRPY) shows a compositional bias: low complexity. 10 disordered regions span residues 1-84 (MYPG…PAPR), 109-208 (ATAP…VPGI), 303-418 (VHAR…NNVR), 449-481 (INGR…KLPF), 607-652 (VKPP…EARL), 695-731 (GKPV…APSA), 746-786 (VQGS…SQPM), 811-929 (SANN…SDDG), 943-1012 (KKAK…EDGK), and 1086-1191 (ATPL…ALLR). Positions 12 to 21 (QVPPPPPMSP) are enriched in pro residues. A compositionally biased stretch (low complexity) spans 22–31 (PLSQMHQQMS). Positions 53–64 (APPPPPPGPPPA) are enriched in pro residues. Residues 157-173 (SSQTWQTTSSSSTNTAS) show a composition bias toward low complexity. 3 stretches are compositionally biased toward polar residues: residues 174–183 (VNDNVQSNAP), 191–205 (NNSA…SSNV), and 318–327 (HGRQGSINSR). The segment covering 328–337 (GNDKGTHDGS) has biased composition (basic and acidic residues). The span at 338 to 363 (DSPNTPSSQSRSTTIPTFPDGSSFSN) shows a compositional bias: polar residues. Residues 396-408 (SSTPKSSTLSVSP) are compositionally biased toward low complexity. Polar residues predominate over residues 409–418 (HSSRFGNNVR). 2 stretches are compositionally biased toward polar residues: residues 613–622 (SQQSTWSAGD) and 630–641 (GTSSSMSRQQNT). Composition is skewed to basic and acidic residues over residues 642–652 (LKDDQSEEARL) and 698–714 (VDFD…KNTD). Positions 846-860 (RSQTAGDLSPISQMP) are enriched in polar residues. Positions 917-928 (QSDDDSGDDSDD) are enriched in acidic residues. The segment covering 977 to 986 (VSFNSPQSAR) has biased composition (polar residues). The segment covering 1001-1012 (PKSDMWDSEDGK) has biased composition (basic and acidic residues). The span at 1086–1111 (ATPLNSLPPSRVQSMYNESDTLGSDE) shows a compositional bias: polar residues. The segment covering 1142 to 1152 (SIREKARGAHE) has biased composition (basic and acidic residues). The segment covering 1158 to 1188 (TQTSMAAPQGLSRSGGTPATETQPTQNNSSA) has biased composition (polar residues). The region spanning 1238–1507 (WFKGQLIGKG…NKLLSQHPFC (270 aa)) is the Protein kinase domain. Residues 1244 to 1252 (IGKGTYGRV) and K1267 each bind ATP.

It belongs to the protein kinase superfamily. STE Ser/Thr protein kinase family. MAP kinase kinase kinase subfamily. Interacts with the adapter protein MST50 and MIP11.

The catalysed reaction is L-seryl-[protein] + ATP = O-phospho-L-seryl-[protein] + ADP + H(+). It catalyses the reaction L-threonyl-[protein] + ATP = O-phospho-L-threonyl-[protein] + ADP + H(+). Mitogen-activated protein kinase kinase kinase; part of the MCK1-MKK2-MPS1 MAP kinase (MAPK) signal transduction cascade that is essential for appressorium formation, penetration and invasive growth. Beside its role in pathogenesis, the MPS1 cascade is active in conidiation and cellular stress responses. Targets downstream of the the MPS1-MAPK pathway include transcription factors MIG1 and SWI6, as well as GSK1 and MPG1. The protein is Mitogen-activated protein kinase kinae kinase MCK1 of Pyricularia oryzae (strain 70-15 / ATCC MYA-4617 / FGSC 8958) (Rice blast fungus).